Consider the following 173-residue polypeptide: Putative metal-dependent hydrolase BC_2708 (173 aa).

Zn(2+)-binding residues include H65, H156, and H160.

The protein belongs to the metal hydrolase YfiT family. As to quaternary structure, homodimer. Requires Zn(2+) as cofactor.

It localises to the cytoplasm. Its function is as follows. Possible metal-dependent hydrolase. The polypeptide is Putative metal-dependent hydrolase BC_2708 (Bacillus cereus (strain ATCC 14579 / DSM 31 / CCUG 7414 / JCM 2152 / NBRC 15305 / NCIMB 9373 / NCTC 2599 / NRRL B-3711)).